The chain runs to 158 residues: Transcription elongation factor GreA (158 aa).

The stretch at 46–66 (AEYEAAKERQGFIEGRISELE) forms a coiled coil.

The protein belongs to the GreA/GreB family.

Necessary for efficient RNA polymerase transcription elongation past template-encoded arresting sites. The arresting sites in DNA have the property of trapping a certain fraction of elongating RNA polymerases that pass through, resulting in locked ternary complexes. Cleavage of the nascent transcript by cleavage factors such as GreA or GreB allows the resumption of elongation from the new 3'terminus. GreA releases sequences of 2 to 3 nucleotides. This is Transcription elongation factor GreA from Neisseria meningitidis serogroup A / serotype 4A (strain DSM 15465 / Z2491).